A 480-amino-acid chain; its full sequence is Protein nucleotidyltransferase YdiU (480 aa).

Gly86, Gly88, Arg89, Lys109, Asp121, Gly122, Arg172, and Arg179 together coordinate ATP. The active-site Proton acceptor is the Asp248. The Mg(2+) site is built by Asn249 and Asp258. Asp258 contacts ATP.

Belongs to the SELO family. It depends on Mg(2+) as a cofactor. The cofactor is Mn(2+).

It carries out the reaction L-seryl-[protein] + ATP = 3-O-(5'-adenylyl)-L-seryl-[protein] + diphosphate. The catalysed reaction is L-threonyl-[protein] + ATP = 3-O-(5'-adenylyl)-L-threonyl-[protein] + diphosphate. The enzyme catalyses L-tyrosyl-[protein] + ATP = O-(5'-adenylyl)-L-tyrosyl-[protein] + diphosphate. It catalyses the reaction L-histidyl-[protein] + UTP = N(tele)-(5'-uridylyl)-L-histidyl-[protein] + diphosphate. It carries out the reaction L-seryl-[protein] + UTP = O-(5'-uridylyl)-L-seryl-[protein] + diphosphate. The catalysed reaction is L-tyrosyl-[protein] + UTP = O-(5'-uridylyl)-L-tyrosyl-[protein] + diphosphate. Its function is as follows. Nucleotidyltransferase involved in the post-translational modification of proteins. It can catalyze the addition of adenosine monophosphate (AMP) or uridine monophosphate (UMP) to a protein, resulting in modifications known as AMPylation and UMPylation. This is Protein nucleotidyltransferase YdiU from Klebsiella pneumoniae subsp. pneumoniae (strain ATCC 700721 / MGH 78578).